The chain runs to 655 residues: Ankyrin repeat and SAM domain-containing protein 3 (655 aa).

The tract at residues 1 to 421 (MSELSDEASE…PGSEPQTEKS (421 aa)) is interaction with NEK7. 2 positions are modified to phosphoserine: serine 2 and serine 5. ANK repeat units follow at residues 34 to 64 (DVPL…DLNK), 68 to 97 (GGWT…SVNV), 101 to 130 (EGQT…ELEM), 134 to 163 (HGWT…NANV), 168 to 197 (YGYT…KVDT), and 201 to 220 (SGAT…IVAL). Asparagine 96 carries the 3-hydroxyasparagine modification. Phosphoserine is present on residues serine 201, serine 225, serine 243, serine 244, and serine 245. The disordered stretch occupies residues 314–426 (YRDVTSPINE…QTEKSPYSGP (113 aa)). A Phosphothreonine modification is found at threonine 318. 4 positions are modified to phosphoserine: serine 319, serine 366, serine 369, and serine 373. Residues 378–395 (KSSVRKQTRSYLKNKSRH) are compositionally biased toward basic residues. The SAM domain occupies 424-487 (SGPQDLATLL…TSAIARWHSS (64 aa)). Positions 500–575 (ADRLETEMQE…AALVLDQLRA (76 aa)) form a coiled coil. Position 540 is a phosphoserine (serine 540).

In terms of assembly, homooligomer. Interacts (via SAM domain) with ANKS6 (via SAM domain). Interacts with BICC1. Interacts with NPHP1. Interacts with NEK8. Interacts with HIF1AN. Interacts with NEK7; this interaction alters the subcellular distribution of NEK7 by preventing its nuclear translocation. Hydroxylated at Asn-96, most probably by HIF1AN. In terms of processing, phosphorylations at Ser-5, Ser-225, Thr-318, Ser-319, Ser-366 and Ser-369 occur in a NEK7-dependent manner. Post-translationally, polyubiquitinated. In terms of tissue distribution, kidney (at protein level).

It localises to the cell projection. It is found in the cilium. The protein localises to the cytoplasm. May be involved in vasopressin signaling in the kidney. The sequence is that of Ankyrin repeat and SAM domain-containing protein 3 (Anks3) from Mus musculus (Mouse).